The following is a 500-amino-acid chain: Glutamate--tRNA ligase (500 aa).

The short motif at 13–23 is the 'HIGH' region element; it reads PSPTGTPHVGM. A 'KMSKS' region motif is present at residues 258–262; that stretch reads KLSKR. ATP is bound at residue lysine 261.

It belongs to the class-I aminoacyl-tRNA synthetase family. Glutamate--tRNA ligase type 1 subfamily. In terms of assembly, monomer.

It localises to the cytoplasm. It carries out the reaction tRNA(Glu) + L-glutamate + ATP = L-glutamyl-tRNA(Glu) + AMP + diphosphate. In terms of biological role, catalyzes the attachment of glutamate to tRNA(Glu) in a two-step reaction: glutamate is first activated by ATP to form Glu-AMP and then transferred to the acceptor end of tRNA(Glu). This Corynebacterium jeikeium (strain K411) protein is Glutamate--tRNA ligase.